A 184-amino-acid chain; its full sequence is Glutathione-regulated potassium-efflux system ancillary protein KefG (184 aa).

The protein belongs to the NAD(P)H dehydrogenase (quinone) family. KefG subfamily. In terms of assembly, interacts with KefB.

It localises to the cell inner membrane. It catalyses the reaction a quinone + NADH + H(+) = a quinol + NAD(+). The enzyme catalyses a quinone + NADPH + H(+) = a quinol + NADP(+). Functionally, regulatory subunit of a potassium efflux system that confers protection against electrophiles. Required for full activity of KefB. The polypeptide is Glutathione-regulated potassium-efflux system ancillary protein KefG (Escherichia coli O1:K1 / APEC).